The following is a 930-amino-acid chain: Isoleucine--tRNA ligase (930 aa).

The 'HIGH' region motif lies at 57 to 67 (PYANGNIHVGH). Glutamate 554 contributes to the L-isoleucyl-5'-AMP binding site. Residues 595 to 599 (KMSKS) carry the 'KMSKS' region motif. Lysine 598 provides a ligand contact to ATP. Zn(2+)-binding residues include cysteine 888, cysteine 891, cysteine 908, and cysteine 911.

The protein belongs to the class-I aminoacyl-tRNA synthetase family. IleS type 1 subfamily. Monomer. Zn(2+) serves as cofactor.

It is found in the cytoplasm. The enzyme catalyses tRNA(Ile) + L-isoleucine + ATP = L-isoleucyl-tRNA(Ile) + AMP + diphosphate. Catalyzes the attachment of isoleucine to tRNA(Ile). As IleRS can inadvertently accommodate and process structurally similar amino acids such as valine, to avoid such errors it has two additional distinct tRNA(Ile)-dependent editing activities. One activity is designated as 'pretransfer' editing and involves the hydrolysis of activated Val-AMP. The other activity is designated 'posttransfer' editing and involves deacylation of mischarged Val-tRNA(Ile). This is Isoleucine--tRNA ligase from Streptococcus sanguinis (strain SK36).